Reading from the N-terminus, the 737-residue chain is Translation initiation factor IF-2 (737 aa).

Residues 55–152 (KKKEHIQHNK…PVPPRKNKPL (98 aa)) form a disordered region. Over residues 60–70 (IQHNKNKDNFH) the composition is skewed to basic and acidic residues. Residues 88-98 (KNVHKNNRKRS) are compositionally biased toward basic residues. Residues 105–121 (NNNAKNGQRNNRNNRSN) show a composition bias toward low complexity. Over residues 122-131 (NKFKNKRNNN) the composition is skewed to basic residues. Over residues 132–142 (NKRNNNFKKGN) the composition is skewed to low complexity. One can recognise a tr-type G domain in the interval 238–407 (KRPPVVTIMG…LLEAEMLELH (170 aa)). The interval 247-254 (GHVDHGKT) is G1. GTP is bound at residue 247-254 (GHVDHGKT). A G2 region spans residues 272-276 (GITQH). The tract at residues 293 to 296 (DTPG) is G3. GTP-binding positions include 293–297 (DTPGH) and 347–350 (NKID). Residues 347 to 350 (NKID) are G4. The tract at residues 383-385 (SAK) is G5.

It belongs to the TRAFAC class translation factor GTPase superfamily. Classic translation factor GTPase family. IF-2 subfamily.

The protein localises to the cytoplasm. One of the essential components for the initiation of protein synthesis. Protects formylmethionyl-tRNA from spontaneous hydrolysis and promotes its binding to the 30S ribosomal subunits. Also involved in the hydrolysis of GTP during the formation of the 70S ribosomal complex. This is Translation initiation factor IF-2 from Ligilactobacillus salivarius (strain UCC118) (Lactobacillus salivarius).